A 319-amino-acid chain; its full sequence is Taste receptor type 2 member 39 (319 aa).

Over 1-16 (MAQPSNYWKQDLLPLS) the chain is Extracellular. The chain crosses the membrane as a helical span at residues 17-37 (ILILTLVATECTIGIIASGII). At 38–56 (TVVNAVSWVQKRAVSITTR) the chain is on the cytoplasmic side. The chain crosses the membrane as a helical span at residues 57–77 (ILLLLSVSRIGLQSIILIEMT). Topologically, residues 78–97 (SSIFNFSSYNSVLYRVSRVS) are extracellular. Asparagine 82 carries N-linked (GlcNAc...) asparagine glycosylation. The chain crosses the membrane as a helical span at residues 98–118 (FVFLNYCSLWFAALLSFFHFV). Residues 119-137 (KIANFSYPLFFKLKWRISE) are Cytoplasmic-facing. The helical transmembrane segment at 138–158 (LMPWLLWLSVFISFSSSMFFC) threads the bilayer. Residues 159-187 (NHKYTVYNNISLSSNICNFTMELYVAEAN) lie on the Extracellular side of the membrane. N-linked (GlcNAc...) asparagine glycans are attached at residues asparagine 167 and asparagine 176. A helical membrane pass occupies residues 188–208 (VVNVAFLFSFGILPPLTMFIA). Residues 209–247 (TATLLIFSLRRHTLHMRNGDADSRNPRVEAHKQAIKETS) are Cytoplasmic-facing. Residues 248-268 (CFLFLYILYAAVLFLSTSNIA) form a helical membrane-spanning segment. At 269 to 273 (DASLF) the chain is on the extracellular side. The chain crosses the membrane as a helical span at residues 274-294 (WSSVLRISLPVYPAGHSVLLI). Over 295 to 319 (QSNPGLKRTWKQLLSQIHLHLQSRY) the chain is Cytoplasmic.

This sequence belongs to the G-protein coupled receptor T2R family.

It is found in the membrane. In terms of biological role, putative taste receptor which may play a role in the perception of bitterness. This chain is Taste receptor type 2 member 39, found in Rattus norvegicus (Rat).